We begin with the raw amino-acid sequence, 516 residues long: Cytochrome P450 1A1 (516 aa).

A mitochondrial targeting signal region spans residues 25 to 36 (FRPQVPKGLKSP). O-linked (GlcNAc) serine glycosylation is present at Ser-63. Phe-220 serves as a coordination point for substrate. Cys-453 is a heme binding site.

This sequence belongs to the cytochrome P450 family. Interacts with cytosolic chaperones HSP70 and HSP90; this interaction is required for initial targeting to mitochondria. Interacts (via mitochondrial targeting signal) with TOMM40 (via N-terminus); this interaction is required for translocation across the mitochondrial outer membrane. The cofactor is heme. In terms of tissue distribution, constitutively expressed in liver.

Its subcellular location is the endoplasmic reticulum membrane. The protein resides in the mitochondrion inner membrane. It localises to the microsome membrane. It is found in the cytoplasm. The enzyme catalyses an organic molecule + reduced [NADPH--hemoprotein reductase] + O2 = an alcohol + oxidized [NADPH--hemoprotein reductase] + H2O + H(+). The catalysed reaction is estrone + reduced [NADPH--hemoprotein reductase] + O2 = 2-hydroxyestrone + oxidized [NADPH--hemoprotein reductase] + H2O + H(+). It catalyses the reaction estrone + reduced [NADPH--hemoprotein reductase] + O2 = 4-hydroxyestrone + oxidized [NADPH--hemoprotein reductase] + H2O + H(+). It carries out the reaction estrone + reduced [NADPH--hemoprotein reductase] + O2 = 6alpha-hydroxyestrone + oxidized [NADPH--hemoprotein reductase] + H2O + H(+). The enzyme catalyses estrone + reduced [NADPH--hemoprotein reductase] + O2 = 15alpha-hydroxyestrone + oxidized [NADPH--hemoprotein reductase] + H2O + H(+). The catalysed reaction is estrone + reduced [NADPH--hemoprotein reductase] + O2 = 16alpha-hydroxyestrone + oxidized [NADPH--hemoprotein reductase] + H2O + H(+). It catalyses the reaction 17beta-estradiol + reduced [NADPH--hemoprotein reductase] + O2 = 2-hydroxy-17beta-estradiol + oxidized [NADPH--hemoprotein reductase] + H2O + H(+). It carries out the reaction 17beta-estradiol + reduced [NADPH--hemoprotein reductase] + O2 = 4-hydroxy-17beta-estradiol + oxidized [NADPH--hemoprotein reductase] + H2O + H(+). The enzyme catalyses 17beta-estradiol + reduced [NADPH--hemoprotein reductase] + O2 = 6alpha-hydroxy-17beta-estradiol + oxidized [NADPH--hemoprotein reductase] + H2O + H(+). The catalysed reaction is 17beta-estradiol + reduced [NADPH--hemoprotein reductase] + O2 = 7alpha-hydroxy-17beta-estradiol + oxidized [NADPH--hemoprotein reductase] + H2O + H(+). It catalyses the reaction 17beta-estradiol + reduced [NADPH--hemoprotein reductase] + O2 = 15alpha-hydroxy-17beta-estradiol + oxidized [NADPH--hemoprotein reductase] + H2O + H(+). It carries out the reaction (5Z,8Z,11Z)-eicosatrienoate + reduced [NADPH--hemoprotein reductase] + O2 = 19-hydroxy-(5Z,8Z,11Z)-eicosatrienoate + oxidized [NADPH--hemoprotein reductase] + H2O + H(+). The enzyme catalyses (5Z,8Z,11Z,14Z)-eicosatetraenoate + reduced [NADPH--hemoprotein reductase] + O2 = 16-hydroxy-(5Z,8Z,11Z,14Z)-eicosatetraenoate + oxidized [NADPH--hemoprotein reductase] + H2O + H(+). The catalysed reaction is (5Z,8Z,11Z,14Z)-eicosatetraenoate + reduced [NADPH--hemoprotein reductase] + O2 = 17-hydroxy-(5Z,8Z,11Z,14Z)-eicosatetraenoate + oxidized [NADPH--hemoprotein reductase] + H2O + H(+). It catalyses the reaction (5Z,8Z,11Z,14Z)-eicosatetraenoate + reduced [NADPH--hemoprotein reductase] + O2 = 18-hydroxy-(5Z,8Z,11Z,14Z)-eicosatetraenoate + oxidized [NADPH--hemoprotein reductase] + H2O + H(+). It carries out the reaction (5Z,8Z,11Z,14Z)-eicosatetraenoate + reduced [NADPH--hemoprotein reductase] + O2 = 19-hydroxy-(5Z,8Z,11Z,14Z)-eicosatetraenoate + oxidized [NADPH--hemoprotein reductase] + H2O + H(+). The enzyme catalyses (5Z,8Z,11Z,14Z,17Z)-eicosapentaenoate + reduced [NADPH--hemoprotein reductase] + O2 = 19-hydroxy-(5Z,8Z,11Z,14Z,17Z)-eicosapentaenoate + oxidized [NADPH--hemoprotein reductase] + H2O + H(+). The catalysed reaction is (5Z,8Z,11Z,14Z)-eicosatetraenoate + reduced [NADPH--hemoprotein reductase] + O2 = (8R,9S)-epoxy-(5Z,11Z,14Z)-eicosatrienoate + oxidized [NADPH--hemoprotein reductase] + H2O + H(+). It catalyses the reaction (5Z,8Z,11Z,14Z)-eicosatetraenoate + reduced [NADPH--hemoprotein reductase] + O2 = (11R,12S)-epoxy-(5Z,8Z,14Z)-eicosatrienoate + oxidized [NADPH--hemoprotein reductase] + H2O + H(+). It carries out the reaction (5Z,8Z,11Z,14Z)-eicosatetraenoate + reduced [NADPH--hemoprotein reductase] + O2 = (14S,15R)-epoxy-(5Z,8Z,11Z)-eicosatrienoate + oxidized [NADPH--hemoprotein reductase] + H2O + H(+). The enzyme catalyses (5Z,8Z,11Z,14Z)-eicosatetraenoate + reduced [NADPH--hemoprotein reductase] + O2 = (14R,15S)-epoxy-(5Z,8Z,11Z)-eicosatrienoate + oxidized [NADPH--hemoprotein reductase] + H2O + H(+). The catalysed reaction is (5Z,8Z,11Z,14Z,17Z)-eicosapentaenoate + reduced [NADPH--hemoprotein reductase] + O2 = (17R,18S)-epoxy-(5Z,8Z,11Z,14Z)-eicosatetraenoate + oxidized [NADPH--hemoprotein reductase] + H2O + H(+). It catalyses the reaction (4Z,7Z,10Z,13Z,16Z,19Z)-docosahexaenoate + reduced [NADPH--hemoprotein reductase] + O2 = (19S,20R)-epoxy-(4Z,7Z,10Z,13Z,16Z)-docosapentaenoate + oxidized [NADPH--hemoprotein reductase] + H2O + H(+). It carries out the reaction (4Z,7Z,10Z,13Z,16Z,19Z)-docosahexaenoate + reduced [NADPH--hemoprotein reductase] + O2 = (19R,20S)-epoxy-(4Z,7Z,10Z,13Z,16Z)-docosapentaenoate + oxidized [NADPH--hemoprotein reductase] + H2O + H(+). The enzyme catalyses all-trans-retinol + reduced [NADPH--hemoprotein reductase] + O2 = all-trans-retinal + oxidized [NADPH--hemoprotein reductase] + 2 H2O + H(+). The catalysed reaction is all-trans-retinal + reduced [NADPH--hemoprotein reductase] + O2 = all-trans-retinoate + oxidized [NADPH--hemoprotein reductase] + H2O + 2 H(+). It catalyses the reaction (13S)-hydroperoxy-(9Z,11E)-octadecadienoate = 13-oxo-(9Z,11E)-octadecadienoate + H2O. It carries out the reaction (12S)-hydroperoxy-(5Z,8Z,10E,14Z)-eicosatetraenoate = 12-oxo-(5Z,8Z,10E,14Z)-eicosatetraenoate + H2O. The enzyme catalyses (15S)-hydroperoxy-(5Z,8Z,11Z,13E)-eicosatetraenoate = 15-oxo-(5Z,8Z,11Z,13E)-eicosatetraenoate + H2O. The catalysed reaction is (5S)-hydroperoxy-(6E,8Z,11Z,14Z)-eicosatetraenoate = 5-oxo-(6E,8Z,11Z,14Z)-eicosatetraenoate + H2O. The protein operates within steroid hormone biosynthesis. Its pathway is lipid metabolism; fatty acid metabolism. It participates in cofactor metabolism; retinol metabolism. Functionally, a cytochrome P450 monooxygenase involved in the metabolism of various endogenous substrates, including fatty acids, steroid hormones and vitamins. Mechanistically, uses molecular oxygen inserting one oxygen atom into a substrate, and reducing the second into a water molecule, with two electrons provided by NADPH via cytochrome P450 reductase (CPR; NADPH-ferrihemoprotein reductase). Catalyzes the hydroxylation of carbon-hydrogen bonds. Exhibits high catalytic activity for the formation of hydroxyestrogens from estrone (E1) and 17beta-estradiol (E2), namely 2-hydroxy E1 and E2, as well as D-ring hydroxylated E1 and E2 at the C15alpha and C16alpha positions. Displays different regioselectivities for polyunsaturated fatty acids (PUFA) hydroxylation. Catalyzes the epoxidation of double bonds of certain PUFA. Converts arachidonic acid toward epoxyeicosatrienoic acid (EET) regioisomers, 8,9-, 11,12-, and 14,15-EET, that function as lipid mediators in the vascular system. Displays an absolute stereoselectivity in the epoxidation of eicosapentaenoic acid (EPA) producing the 17(R),18(S) enantiomer. May play an important role in all-trans retinoic acid biosynthesis in extrahepatic tissues. Catalyzes two successive oxidative transformation of all-trans retinol to all-trans retinal and then to the active form all-trans retinoic acid. May also participate in eicosanoids metabolism by converting hydroperoxide species into oxo metabolites (lipoxygenase-like reaction, NADPH-independent). This Cavia porcellus (Guinea pig) protein is Cytochrome P450 1A1 (CYP1A1).